The sequence spans 434 residues: UDP-N-acetylglucosamine 1-carboxyvinyltransferase 1 (434 aa).

22–23 (KN) contributes to the phosphoenolpyruvate binding site. Arginine 93 is a binding site for UDP-N-acetyl-alpha-D-glucosamine. Cysteine 117 acts as the Proton donor in catalysis. The residue at position 117 (cysteine 117) is a 2-(S-cysteinyl)pyruvic acid O-phosphothioketal. Residues 122-126 (RPIDQ), aspartate 306, and valine 328 contribute to the UDP-N-acetyl-alpha-D-glucosamine site.

The protein belongs to the EPSP synthase family. MurA subfamily.

The protein resides in the cytoplasm. The catalysed reaction is phosphoenolpyruvate + UDP-N-acetyl-alpha-D-glucosamine = UDP-N-acetyl-3-O-(1-carboxyvinyl)-alpha-D-glucosamine + phosphate. Its pathway is cell wall biogenesis; peptidoglycan biosynthesis. Its function is as follows. Cell wall formation. Adds enolpyruvyl to UDP-N-acetylglucosamine. The sequence is that of UDP-N-acetylglucosamine 1-carboxyvinyltransferase 1 from Bacillus anthracis.